The primary structure comprises 685 residues: Mesothelin-like protein (685 aa).

The signal sequence occupies residues 1–32 (MSRTLRPSAMGSRVGALASPGLALLLSLTAHC). The Extracellular segment spans residues 33 to 627 (SGPQAKGLPK…GVSHTSGSPP (595 aa)). 2 N-linked (GlcNAc...) asparagine glycosylation sites follow: Asn315 and Asn400. Residues 603 to 624 (PPSSLIHSLDPPGNDGVSHTSG) are disordered. A helical transmembrane segment spans residues 628-648 (VHLGYLSLAVALPSSLLWLLL). Over 649 to 685 (CQLPSGQMATAHRTLGPMALAQGSWTPEHQIPEKRSC) the chain is Cytoplasmic.

This sequence belongs to the mesothelin family.

The protein localises to the membrane. In terms of biological role, may play a role in cellular adhesion. The chain is Mesothelin-like protein (Mslnl) from Mus musculus (Mouse).